The primary structure comprises 723 residues: DNA-binding protein RFX2 (723 aa).

The interval 1–46 is disordered; sequence MQNSEGGADSPASVALRPSAAAPPVPASPQRVLVQAASSNPKGAQM. Positions 10–20 are enriched in low complexity; it reads SPASVALRPSA. Ser28 is modified (phosphoserine). Positions 199-274 form a DNA-binding region, RFX-type winged-helix; it reads HLQWLLDNYE…YHYYGIRLKP (76 aa). Residues 292-332 form a disordered region; sequence QQPMHQKPRYRPAQKTDSLGDSGSHSGLHSTPEQTMAVQSQ. Low complexity predominate over residues 308–321; that stretch reads DSLGDSGSHSGLHS. Residues 322 to 332 are compositionally biased toward polar residues; the sequence is TPEQTMAVQSQ. Ser416 is modified (phosphoserine). The disordered stretch occupies residues 688–723; the sequence is MGDEQRGSEAGPDARSLGEPLVKRERSDPNHSLQGI.

This sequence belongs to the RFX family. In terms of assembly, homodimer; probably only forms homodimers in testis. Heterodimer; heterodimerizes with RFX1 and RFX3.

It is found in the nucleus. The protein resides in the cytoplasm. In terms of biological role, transcription factor that acts as a key regulator of spermatogenesis. Acts by regulating expression of genes required for the haploid phase during spermiogenesis, such as genes required for cilium assembly and function. Recognizes and binds the X-box, a regulatory motif with DNA sequence 5'-GTNRCC(0-3N)RGYAAC-3' present on promoters. Probably activates transcription of the testis-specific histone gene H1-6. In Homo sapiens (Human), this protein is DNA-binding protein RFX2 (RFX2).